The sequence spans 502 residues: Exodeoxyribonuclease 7 large subunit (502 aa).

Residues 474–495 are compositionally biased toward low complexity; that stretch reads SAPSTTKKSAPKPAAPKAPKTP. Residues 474–502 form a disordered region; sequence SAPSTTKKSAPKPAAPKAPKTPGEQGSLF.

The protein belongs to the XseA family. In terms of assembly, heterooligomer composed of large and small subunits.

The protein localises to the cytoplasm. The catalysed reaction is Exonucleolytic cleavage in either 5'- to 3'- or 3'- to 5'-direction to yield nucleoside 5'-phosphates.. In terms of biological role, bidirectionally degrades single-stranded DNA into large acid-insoluble oligonucleotides, which are then degraded further into small acid-soluble oligonucleotides. The polypeptide is Exodeoxyribonuclease 7 large subunit (Ruegeria sp. (strain TM1040) (Silicibacter sp.)).